Reading from the N-terminus, the 619-residue chain is Enolase 4 (619 aa).

Residues 173 to 184 (DKERKELEKSQE) are compositionally biased toward basic and acidic residues. Residues 173–236 (DKERKELEKS…PPEPPEPVLH (64 aa)) form a disordered region. The span at 188–206 (PAPPPVTLPPPPPPPPPPP) shows a compositional bias: pro residues. Substrate is bound at residue Glu302. Positions 333 to 354 (TLPPPKQETKKGHNGSKRAQPP) are disordered. Lys497 functions as the Proton acceptor in the catalytic mechanism. Lys548 serves as a coordination point for substrate.

It belongs to the enolase family. As to quaternary structure, interacts with ENO1. Isoform 1 and isoform 4 interact with AKAP4. Post-translationally, synthesized as an approximately 70-kDa precursor, which then undergoes proteolytic cleavage to an approximately 60-kDa enzyme; HOATZ associates directly or indirectly with ENO4 to mediate this process before its transport to mature flagella. In terms of tissue distribution, testis-specific. Expressed in spermatids and ependyma (at protein level). As to expression, expressed at higher levels in late spermatids than in pachytene spermatocytes. Expressed at higher levels in pachytene spermatocytes than in late spermatids.

It catalyses the reaction (2R)-2-phosphoglycerate = phosphoenolpyruvate + H2O. It functions in the pathway carbohydrate degradation; glycolysis; pyruvate from D-glyceraldehyde 3-phosphate: step 4/5. Its function is as follows. Required for sperm motility, function and male fertility. May be involved in the normal assembly of the sperm fibrous sheath and provides most of the enolase activity in sperm. The protein is Enolase 4 (Eno4) of Mus musculus (Mouse).